Here is a 994-residue protein sequence, read N- to C-terminus: Alanine--tRNA ligase, chloroplastic/mitochondrial (994 aa).

The disordered stretch occupies residues 1-29; it reads MGGLKLPPQTLHGIHGGRRPLTAPSSKPS. Residues H672, H676, C774, and H778 each contribute to the Zn(2+) site.

Belongs to the class-II aminoacyl-tRNA synthetase family. In terms of assembly, monomer. The cofactor is Zn(2+).

The protein localises to the plastid. The protein resides in the chloroplast. It is found in the mitochondrion. The enzyme catalyses tRNA(Ala) + L-alanine + ATP = L-alanyl-tRNA(Ala) + AMP + diphosphate. Functionally, catalyzes the attachment of alanine to tRNA(Ala) in a two-step reaction: alanine is first activated by ATP to form Ala-AMP and then transferred to the acceptor end of tRNA(Ala). Also edits incorrectly charged tRNA(Ala) via its editing domain. In Populus trichocarpa (Western balsam poplar), this protein is Alanine--tRNA ligase, chloroplastic/mitochondrial.